The sequence spans 302 residues: MTITGSRGFPDGYLAPGSSFLDFAAQHAPTIMPGTQPTFDTIPQDIAPHGTTIVALEYHNGIIIAGDRRATMGTTIAHREIEKVFAADEHSAIAIAGTAGLAIELVRLFQLELEHYEKIEGTPLSLDGKANRLSTMLRSHLHLALQGLPIVPIFAGWDSTRHQGRLFAYDVTGGRYEEPNFTCAGSGSVFARSALKKLWKPQLDATRAITIALEALWDAADDDTATAGPDIIRRIWPIIAVIDHKGFRYVSEADLAHANDTIAHQRSQDHQHVRVLEPGRDGPGNRLPSQGSATIIPESDQS.

Positions 1 to 50 (MTITGSRGFPDGYLAPGSSFLDFAAQHAPTIMPGTQPTFDTIPQDIAPHG) are cleaved as a propeptide — removed in mature form; by autocatalysis. Residue Thr51 is the Nucleophile of the active site. The tract at residues 277-302 (EPGRDGPGNRLPSQGSATIIPESDQS) is disordered. Over residues 287–302 (LPSQGSATIIPESDQS) the composition is skewed to polar residues.

This sequence belongs to the peptidase T1B family. As to quaternary structure, the 20S proteasome core is composed of 14 alpha and 14 beta subunits that assemble into four stacked heptameric rings, resulting in a barrel-shaped structure. The two inner rings, each composed of seven catalytic beta subunits, are sandwiched by two outer rings, each composed of seven alpha subunits. The catalytic chamber with the active sites is on the inside of the barrel. Has a gated structure, the ends of the cylinder being occluded by the N-termini of the alpha-subunits. Is capped by the proteasome-associated ATPase, ARC.

The protein resides in the cytoplasm. The catalysed reaction is Cleavage of peptide bonds with very broad specificity.. It functions in the pathway protein degradation; proteasomal Pup-dependent pathway. With respect to regulation, the formation of the proteasomal ATPase ARC-20S proteasome complex, likely via the docking of the C-termini of ARC into the intersubunit pockets in the alpha-rings, may trigger opening of the gate for substrate entry. Interconversion between the open-gate and close-gate conformations leads to a dynamic regulation of the 20S proteasome proteolysis activity. Its function is as follows. Component of the proteasome core, a large protease complex with broad specificity involved in protein degradation. The polypeptide is Proteasome subunit beta (Jonesia denitrificans (strain ATCC 14870 / DSM 20603 / BCRC 15368 / CIP 55.134 / JCM 11481 / NBRC 15587 / NCTC 10816 / Prevot 55134) (Listeria denitrificans)).